We begin with the raw amino-acid sequence, 1363 residues long: Vascular endothelial growth factor receptor 3 (1363 aa).

Positions 1–24 are cleaved as a signal peptide; it reads MQRGAALCLRLWLCLGLLDGLVSG. The Extracellular segment spans residues 25 to 775; that stretch reads YSMTPPTLNI…EGSEDKGSME (751 aa). Ig-like C2-type domains lie at 30–127, 151–213, 219–326, 331–415, 422–552, 555–671, and 678–764; these read PTLN…TAAS, KDAM…WGDQ, PFLV…TEVI, PFIS…ISLE, PQIH…FYVT, PDGF…KYLS, and PRLT…ASVA. Residues Asn-33, Asn-104, Asn-166, Asn-251, Asn-299, and Asn-411 are each glycosylated (N-linked (GlcNAc...) asparagine). 2 disulfides stabilise this stretch: Cys-51/Cys-111 and Cys-158/Cys-206. A disulfide bridge links Cys-252 with Cys-310. 3 disulfide bridges follow: Cys-445–Cys-534, Cys-466–Cys-486, and Cys-578–Cys-653. N-linked (GlcNAc...) asparagine glycans are attached at residues Asn-515, Asn-527, Asn-594, Asn-683, and Asn-690. Cys-699 and Cys-751 are oxidised to a cystine. N-linked (GlcNAc...) asparagine glycosylation occurs at Asn-758. Residues 776-796 form a helical membrane-spanning segment; the sequence is IVILVGTGVIAVFFWVLLLLI. The Cytoplasmic segment spans residues 797–1363; it reads FCNMRRPAHA…RVTFFTDNSY (567 aa). Tyr-830, Tyr-833, and Tyr-853 each carry phosphotyrosine; by SRC. Residues 845–1173 form the Protein kinase domain; the sequence is LHLGRVLGYG…ELVEILGDLL (329 aa). Residues 851–859 and Lys-879 contribute to the ATP site; that span reads LGYGAFGKV. The active-site Proton acceptor is the Asp-1037. Phosphotyrosine; by autocatalysis and SRC is present on Tyr-1063. Tyr-1068, Tyr-1230, Tyr-1231, and Tyr-1265 each carry phosphotyrosine; by autocatalysis. The interval 1291–1331 is disordered; sequence HRQESGFSCKGPGQNVAVTRAHPDSQGRRRRPERGARGGQV. A phosphotyrosine; by autocatalysis and SRC mark is found at Tyr-1333 and Tyr-1337. At Tyr-1363 the chain carries Phosphotyrosine; by autocatalysis.

Belongs to the protein kinase superfamily. Tyr protein kinase family. CSF-1/PDGF receptor subfamily. As to quaternary structure, interacts with VEGFC and VEGFD. Monomer in the absence of bound VEGFC or VEGFD. Homodimer in the presence of bound VEGFC or VEGFD. Can also form a heterodimer with KDR. Interacts with PTPN14; the interaction is enhanced by stimulation with VEGFC. Interacts with CRK, GRB2, PTK2/FAK1, SHC1, PIK3R1 and PTPN11/SHP-2. Identified in a complex with SRC and ITGB1. Post-translationally, autophosphorylated on tyrosine residues upon ligand binding. Autophosphorylation occurs in trans, i.e. one subunit of the dimeric receptor phosphorylates tyrosine residues on the other subunit. Phosphorylation in response to H(2)O(2) is mediated by a process that requires SRC and PRKCD activity. Phosphorylation at Tyr-1068 is required for autophosphorylation at additional tyrosine residues. Phosphorylation at Tyr-1063 and Tyr-1337 is important for interaction with CRK and subsequent activation of MAPK8. Phosphorylation at Tyr-1230, Tyr-1231 and Tyr-1337 is important for interaction with GRB2 and subsequent activation of the AKT1 and MAPK1/ERK2 and/or MAPK3/ERK1 signaling pathways. In response to endothelial cell adhesion onto collagen, can also be phosphorylated in the absence of FLT4 kinase activity by SRC at Tyr-830, Tyr-833, Tyr-853, Tyr-1063, Tyr-1333, and Tyr-1337. In terms of tissue distribution, detected in endothelial cells (at protein level). Widely expressed. Detected in fetal spleen, lung and brain. Detected in adult liver, muscle, thymus, placenta, lung, testis, ovary, prostate, heart, and kidney.

It is found in the cell membrane. Its subcellular location is the cytoplasm. It localises to the nucleus. The protein localises to the secreted. It catalyses the reaction L-tyrosyl-[protein] + ATP = O-phospho-L-tyrosyl-[protein] + ADP + H(+). Present in an inactive conformation in the absence of bound ligand. Binding of VEGFC or VEGFD leads to dimerization and activation by autophosphorylation on tyrosine residues. Inhibited by MAZ51. In terms of biological role, tyrosine-protein kinase that acts as a cell-surface receptor for VEGFC and VEGFD, and plays an essential role in adult lymphangiogenesis and in the development of the vascular network and the cardiovascular system during embryonic development. Promotes proliferation, survival and migration of endothelial cells, and regulates angiogenic sprouting. Signaling by activated FLT4 leads to enhanced production of VEGFC, and to a lesser degree VEGFA, thereby creating a positive feedback loop that enhances FLT4 signaling. Modulates KDR signaling by forming heterodimers. The secreted isoform 3 may function as a decoy receptor for VEGFC and/or VEGFD and play an important role as a negative regulator of VEGFC-mediated lymphangiogenesis and angiogenesis. Binding of vascular growth factors to isoform 1 or isoform 2 leads to the activation of several signaling cascades; isoform 2 seems to be less efficient in signal transduction, because it has a truncated C-terminus and therefore lacks several phosphorylation sites. Mediates activation of the MAPK1/ERK2, MAPK3/ERK1 signaling pathway, of MAPK8 and the JUN signaling pathway, and of the AKT1 signaling pathway. Phosphorylates SHC1. Mediates phosphorylation of PIK3R1, the regulatory subunit of phosphatidylinositol 3-kinase. Promotes phosphorylation of MAPK8 at 'Thr-183' and 'Tyr-185', and of AKT1 at 'Ser-473'. This chain is Vascular endothelial growth factor receptor 3 (FLT4), found in Homo sapiens (Human).